A 133-amino-acid polypeptide reads, in one-letter code: NADPH-dependent 7-cyano-7-deazaguanine reductase (133 aa).

C49 acts as the Thioimide intermediate in catalysis. Catalysis depends on D56, which acts as the Proton donor. Substrate contacts are provided by residues 71-73 (IEL) and 90-91 (HE).

The protein belongs to the GTP cyclohydrolase I family. QueF type 1 subfamily.

The protein resides in the cytoplasm. It catalyses the reaction 7-aminomethyl-7-carbaguanine + 2 NADP(+) = 7-cyano-7-deazaguanine + 2 NADPH + 3 H(+). Its pathway is tRNA modification; tRNA-queuosine biosynthesis. Its function is as follows. Catalyzes the NADPH-dependent reduction of 7-cyano-7-deazaguanine (preQ0) to 7-aminomethyl-7-deazaguanine (preQ1). In Leptospira borgpetersenii serovar Hardjo-bovis (strain JB197), this protein is NADPH-dependent 7-cyano-7-deazaguanine reductase.